Consider the following 382-residue polypeptide: Heme A synthase (382 aa).

Helical transmembrane passes span 37-57 (IRVW…VGGL), 126-146 (VIGV…QVPA), 152-172 (LLFL…MVAS), 188-208 (LATH…YIME), 231-251 (STGL…VAGI), 288-308 (LVQF…VVVW), and 332-352 (LQIV…IAIF). A heme-binding site is contributed by histidine 293. Histidine 353 is a heme binding site. A helical transmembrane segment spans residues 356-376 (LAVIVWVLILRARFLSGYPIA).

Belongs to the COX15/CtaA family. Type 2 subfamily. Interacts with CtaB. The cofactor is heme b.

The protein resides in the cell membrane. The enzyme catalyses Fe(II)-heme o + 2 A + H2O = Fe(II)-heme a + 2 AH2. Its pathway is porphyrin-containing compound metabolism; heme A biosynthesis; heme A from heme O: step 1/1. Functionally, catalyzes the conversion of heme O to heme A by two successive hydroxylations of the methyl group at C8. The first hydroxylation forms heme I, the second hydroxylation results in an unstable dihydroxymethyl group, which spontaneously dehydrates, resulting in the formyl group of heme A. The polypeptide is Heme A synthase (Roseobacter denitrificans (strain ATCC 33942 / OCh 114) (Erythrobacter sp. (strain OCh 114))).